Reading from the N-terminus, the 408-residue chain is Imidazolonepropionase (408 aa).

Fe(3+) contacts are provided by H74 and H76. Zn(2+)-binding residues include H74 and H76. Residues R83, Y146, and H179 each contribute to the 4-imidazolone-5-propanoate site. Y146 contributes to the N-formimidoyl-L-glutamate binding site. A Fe(3+)-binding site is contributed by H244. H244 serves as a coordination point for Zn(2+). Q247 is a binding site for 4-imidazolone-5-propanoate. A Fe(3+)-binding site is contributed by D319. D319 serves as a coordination point for Zn(2+). The N-formimidoyl-L-glutamate site is built by N321 and G323. Residue T324 coordinates 4-imidazolone-5-propanoate.

Belongs to the metallo-dependent hydrolases superfamily. HutI family. Requires Zn(2+) as cofactor. Fe(3+) is required as a cofactor.

The protein localises to the cytoplasm. The enzyme catalyses 4-imidazolone-5-propanoate + H2O = N-formimidoyl-L-glutamate. It participates in amino-acid degradation; L-histidine degradation into L-glutamate; N-formimidoyl-L-glutamate from L-histidine: step 3/3. Functionally, catalyzes the hydrolytic cleavage of the carbon-nitrogen bond in imidazolone-5-propanoate to yield N-formimidoyl-L-glutamate. It is the third step in the universal histidine degradation pathway. The chain is Imidazolonepropionase from Ralstonia nicotianae (strain ATCC BAA-1114 / GMI1000) (Ralstonia solanacearum).